Here is a 69-residue protein sequence, read N- to C-terminus: Large ribosomal subunit protein bL31 (69 aa).

Zn(2+)-binding residues include cysteine 16, cysteine 18, cysteine 37, and cysteine 40.

This sequence belongs to the bacterial ribosomal protein bL31 family. Type A subfamily. In terms of assembly, part of the 50S ribosomal subunit. Zn(2+) serves as cofactor.

Its function is as follows. Binds the 23S rRNA. This chain is Large ribosomal subunit protein bL31, found in Buchnera aphidicola subsp. Cinara cedri (strain Cc).